A 225-amino-acid polypeptide reads, in one-letter code: Cytidylate kinase (225 aa).

12 to 20 (GPSGAGKGT) contributes to the ATP binding site.

This sequence belongs to the cytidylate kinase family. Type 1 subfamily.

The protein resides in the cytoplasm. It carries out the reaction CMP + ATP = CDP + ADP. The enzyme catalyses dCMP + ATP = dCDP + ADP. This Edwardsiella ictaluri (strain 93-146) protein is Cytidylate kinase.